Here is a 469-residue protein sequence, read N- to C-terminus: 3-isopropylmalate dehydratase large subunit (469 aa).

[4Fe-4S] cluster contacts are provided by Cys347, Cys407, and Cys410.

It belongs to the aconitase/IPM isomerase family. LeuC type 1 subfamily. In terms of assembly, heterodimer of LeuC and LeuD. It depends on [4Fe-4S] cluster as a cofactor.

The enzyme catalyses (2R,3S)-3-isopropylmalate = (2S)-2-isopropylmalate. The protein operates within amino-acid biosynthesis; L-leucine biosynthesis; L-leucine from 3-methyl-2-oxobutanoate: step 2/4. Catalyzes the isomerization between 2-isopropylmalate and 3-isopropylmalate, via the formation of 2-isopropylmaleate. This chain is 3-isopropylmalate dehydratase large subunit, found in Sorangium cellulosum (strain So ce56) (Polyangium cellulosum (strain So ce56)).